We begin with the raw amino-acid sequence, 258 residues long: Serine protease VLSP-3 (258 aa).

A signal peptide spans 1–18 (MVLIRVLANLLVLQLSYA). The propeptide occupies 19–24 (QKSSEL). One can recognise a Peptidase S1 domain in the interval 25 to 249 (VIGGDECNIN…YTDWIQSIIA (225 aa)). Disulfide bonds link Cys31-Cys163, Cys50-Cys66, Cys98-Cys256, Cys142-Cys210, Cys174-Cys189, and Cys200-Cys225. A glycan (N-linked (GlcNAc...) asparagine) is linked at Asn44. His65 acts as the Charge relay system in catalysis. Asn79 and Asn103 each carry an N-linked (GlcNAc...) asparagine glycan. Catalysis depends on Asp110, which acts as the Charge relay system. Residues Asn154 and Asn170 are each glycosylated (N-linked (GlcNAc...) asparagine). The Charge relay system role is filled by Ser204. A glycan (N-linked (GlcNAc...) asparagine) is linked at Asn251.

It belongs to the peptidase S1 family. Snake venom subfamily. In terms of assembly, monomer. Expressed by the venom gland.

The protein resides in the secreted. Its function is as follows. Snake venom serine protease that may act in the hemostasis system of the prey. The chain is Serine protease VLSP-3 from Macrovipera lebetinus (Levantine viper).